Here is a 146-residue protein sequence, read N- to C-terminus: Hut operon positive regulatory protein (146 aa).

It belongs to the HutP family. As to quaternary structure, homohexamer.

Functionally, antiterminator that binds to cis-acting regulatory sequences on the mRNA in the presence of histidine, thereby suppressing transcription termination and activating the hut operon for histidine utilization. The protein is Hut operon positive regulatory protein of Bacillus cytotoxicus (strain DSM 22905 / CIP 110041 / 391-98 / NVH 391-98).